Here is a 118-residue protein sequence, read N- to C-terminus: Small ribosomal subunit protein uS13 (118 aa).

The disordered stretch occupies residues 91–118; it reads HRRGLPVRGQRTKTNARTRKGPRKPIKK.

It belongs to the universal ribosomal protein uS13 family. In terms of assembly, part of the 30S ribosomal subunit. Forms a loose heterodimer with protein S19. Forms two bridges to the 50S subunit in the 70S ribosome.

In terms of biological role, located at the top of the head of the 30S subunit, it contacts several helices of the 16S rRNA. In the 70S ribosome it contacts the 23S rRNA (bridge B1a) and protein L5 of the 50S subunit (bridge B1b), connecting the 2 subunits; these bridges are implicated in subunit movement. Contacts the tRNAs in the A and P-sites. The chain is Small ribosomal subunit protein uS13 from Pectobacterium atrosepticum (strain SCRI 1043 / ATCC BAA-672) (Erwinia carotovora subsp. atroseptica).